We begin with the raw amino-acid sequence, 574 residues long: Protein OBERON 2 (574 aa).

Polar residues-rich tracts occupy residues 1–10 and 65–76; these read MGTSSGSNHP and SMSQKTEPDSME. Residues 1–76 are disordered; it reads MGTSSGSNHP…SQKTEPDSME (76 aa). The PHD-type zinc finger occupies 226–291; sequence LCMCTICNKF…VFKCRACNRT (66 aa). Positions 416-524 form a coiled coil; sequence KKARMALETC…LFEKIKLQEN (109 aa).

In terms of assembly, self-interacts. Interacts with OBE1, OBE3 and OBE4. Binds to VPg of pea seed borne mosaic virus (PSbMV), turnip mosaic virus (TuMV) and lettuce mosaic virus (LMV), but not with VPg of tobacco etch virus (TEV), cowpea mosaic virus (CPMV), tomato black ring virus (TBRV) and grapevine fan leaf virus (GFLV). Expressed in roots, seedlings, stems, leaves, flowers and siliques, especially in the vasculature.

It is found in the nucleus. Probable transcription factor that acts together with OBE1 for the maintenance and/or establishment of both the shoot and root meristems, probably by controlling the expression of the meristem genes such as WUS, PLT1 and PLT2 and of genes required for auxin responses. Promotes cell meristematic activity via the WUSCHEL-CLAVATA pathway. Involved in the development of the basal pole and in auxin-mediated root and vascular development in the embryo. Confers sensitivity to turnip mosaic virus (TuMV) probably by promoting viral movement and multiplication via interaction with TuMV VPg. The protein is Protein OBERON 2 of Arabidopsis thaliana (Mouse-ear cress).